We begin with the raw amino-acid sequence, 1039 residues long: Multidrug resistance protein MdtB (1039 aa).

12 consecutive transmembrane segments (helical) span residues 16 to 36 (FILR…AGII), 342 to 362 (DVQF…YVFL), 373 to 393 (VAVP…GFSI), 396 to 416 (LTLM…IVVI), 440 to 460 (IGFT…PLLF), 472 to 492 (FAVT…TLTP), 537 to 557 (WLTL…YLLI), 863 to 883 (LGGT…VLGV), 888 to 908 (FIHP…ALLA), 911 to 931 (MAGS…IGIV), 968 to 988 (ILMT…STGV), and 1002 to 1022 (GGLV…YLLF).

Belongs to the resistance-nodulation-cell division (RND) (TC 2.A.6) family. MdtB subfamily. In terms of assembly, part of a tripartite efflux system composed of MdtA, MdtB and MdtC. MdtB forms a heteromultimer with MdtC.

The protein resides in the cell inner membrane. The chain is Multidrug resistance protein MdtB from Serratia proteamaculans (strain 568).